Consider the following 401-residue polypeptide: Homocysteine-responsive endoplasmic reticulum-resident ubiquitin-like domain member 2 protein (401 aa).

Residues 10–89 (VTLIIKAPNQ…HMVHLVCASR (80 aa)) form the Ubiquitin-like domain. The tract at residues 87–137 (ASRSPPSSPKSSTDGESHGALASSTNSNSDHSDSTTPSPSQESLSLVAGSS) is disordered. Composition is skewed to low complexity over residues 88-98 (SRSPPSSPKSS) and 109-126 (SSTNSNSDHSDSTTPSPS). A helical transmembrane segment spans residues 299-319 (FIMVMGAMLLVYLHQAGWFPF).

The protein resides in the membrane. Could be involved in the unfolded protein response (UPR) pathway. This chain is Homocysteine-responsive endoplasmic reticulum-resident ubiquitin-like domain member 2 protein (Herpud2), found in Rattus norvegicus (Rat).